Reading from the N-terminus, the 72-residue chain is Translation initiation factor IF-1 (72 aa).

Residues 1–72 (MAKEDNIEMQ…SKGRIVFRSR (72 aa)) form the S1-like domain.

It belongs to the IF-1 family. In terms of assembly, component of the 30S ribosomal translation pre-initiation complex which assembles on the 30S ribosome in the order IF-2 and IF-3, IF-1 and N-formylmethionyl-tRNA(fMet); mRNA recruitment can occur at any time during PIC assembly.

Its subcellular location is the cytoplasm. Its function is as follows. One of the essential components for the initiation of protein synthesis. Stabilizes the binding of IF-2 and IF-3 on the 30S subunit to which N-formylmethionyl-tRNA(fMet) subsequently binds. Helps modulate mRNA selection, yielding the 30S pre-initiation complex (PIC). Upon addition of the 50S ribosomal subunit IF-1, IF-2 and IF-3 are released leaving the mature 70S translation initiation complex. This Shewanella loihica (strain ATCC BAA-1088 / PV-4) protein is Translation initiation factor IF-1.